Reading from the N-terminus, the 1891-residue chain is TATA-binding protein-associated factor mot1 (1891 aa).

Residues 30–68 (PDELFNLLGRILPYLRSKSWDTRAAAAKAIGLIVANADT) form an HEAT 1 repeat. 3 disordered regions span residues 184-216 (FVASREHSIQGTSQPLASPIEPANGEESGLSKR), 241-283 (LSSR…LDRS), and 295-316 (FKGASVPENPLLQPESTEEGPN). The span at 264-275 (ENGEERNGDSKP) shows a compositional bias: basic and acidic residues. HEAT repeat units follow at residues 473-511 (SKLMDGVLEAVMKGLGDYDDDVRAVSAATLVPIAEEFVK) and 569-606 (SSFGKLVPRLYPFLRHTITSVRSAVLRALMTFLQLEGE). Positions 699 to 710 (SAAAPARSSPAS) are enriched in low complexity. The tract at residues 699–740 (SAAAPARSSPASNTPEGTKGRRRKSEKKEAPPPSAHNVDGHM) is disordered. 4 HEAT repeats span residues 957 to 996 (PKKPSHIIKGMMDSIKKEENAELQQRSATAITSLVEYYTT), 1139 to 1177 (YPWVVDLLPLVVKALQCKLSVIRYAAAKCFATICSVITV), 1181 to 1216 (TMLVEKVLPMINDALDVHHRQGAVECIYHLIHVMED), and 1219 to 1257 (LPYVIFLVVPVLGRMSDSDNEVRLLATTSFATLVKLVPL). A Helicase ATP-binding domain is found at 1316–1489 (AFLNRYNLHG…WSLFDFLMPG (174 aa)). 1329 to 1336 (DDMGLGKT) contacts ATP. The short motif at 1440 to 1443 (DEGH) is the DEAH box element. An HEAT 8 repeat occupies 1526 to 1565 (EALHKQVLPFLLRRLKEEVLNDLPPKIIQNYYCDPSELQR). The region spanning 1663–1813 (DLSGASYVSP…STVVNQQNAG (151 aa)) is the Helicase C-terminal domain.

The protein belongs to the SNF2/RAD54 helicase family. In terms of assembly, forms the NCT transcriptional regulatory complex with nctA and nctB.

It is found in the nucleus. Its function is as follows. Regulates transcription in association with TATA binding protein (TBP). Removes TBP from the TATA box via its C-terminal ATPase activity. Both transcription activation and repression require its ATPase activity. Part of the NCT transcriptional regulatory complex that acts as a key regulator of ergosterol biosynthesis and the azole exporter cdr1B. The NCT complex binds the promoters of genes linked to azole susceptibility, and especially represses the expression of cdr1B transporter. This Aspergillus fumigatus (strain CBS 144.89 / FGSC A1163 / CEA10) (Neosartorya fumigata) protein is TATA-binding protein-associated factor mot1.